A 394-amino-acid chain; its full sequence is Uroporphyrinogen decarboxylase 2, chloroplastic (394 aa).

Residues 74–78 (RQAGR), Phe-93, Ser-123, Asp-124, Tyr-201, Ser-256, and His-371 each bind substrate.

It belongs to the uroporphyrinogen decarboxylase family. In terms of assembly, homodimer.

It localises to the plastid. The protein resides in the chloroplast. The enzyme catalyses uroporphyrinogen III + 4 H(+) = coproporphyrinogen III + 4 CO2. The protein operates within porphyrin-containing compound metabolism; protoporphyrin-IX biosynthesis; coproporphyrinogen-III from 5-aminolevulinate: step 4/4. It functions in the pathway porphyrin-containing compound metabolism; chlorophyll biosynthesis. In terms of biological role, catalyzes the decarboxylation of four acetate groups of uroporphyrinogen-III to yield coproporphyrinogen-III. This Arabidopsis thaliana (Mouse-ear cress) protein is Uroporphyrinogen decarboxylase 2, chloroplastic (HEME2).